The primary structure comprises 477 residues: Bifunctional protein HldE (477 aa).

Positions Met1–Thr318 are ribokinase. Residue Lys179 is modified to N6-acetyllysine. Residue Asn195–Glu198 participates in ATP binding. Asp264 is an active-site residue. A cytidylyltransferase region spans residues Met344 to Gly477.

The protein in the N-terminal section; belongs to the carbohydrate kinase PfkB family. It in the C-terminal section; belongs to the cytidylyltransferase family. Homodimer.

It catalyses the reaction D-glycero-beta-D-manno-heptose 7-phosphate + ATP = D-glycero-beta-D-manno-heptose 1,7-bisphosphate + ADP + H(+). The catalysed reaction is D-glycero-beta-D-manno-heptose 1-phosphate + ATP + H(+) = ADP-D-glycero-beta-D-manno-heptose + diphosphate. The protein operates within nucleotide-sugar biosynthesis; ADP-L-glycero-beta-D-manno-heptose biosynthesis; ADP-L-glycero-beta-D-manno-heptose from D-glycero-beta-D-manno-heptose 7-phosphate: step 1/4. It participates in nucleotide-sugar biosynthesis; ADP-L-glycero-beta-D-manno-heptose biosynthesis; ADP-L-glycero-beta-D-manno-heptose from D-glycero-beta-D-manno-heptose 7-phosphate: step 3/4. In terms of biological role, catalyzes the phosphorylation of D-glycero-D-manno-heptose 7-phosphate at the C-1 position to selectively form D-glycero-beta-D-manno-heptose-1,7-bisphosphate. Functionally, catalyzes the ADP transfer from ATP to D-glycero-beta-D-manno-heptose 1-phosphate, yielding ADP-D-glycero-beta-D-manno-heptose. This chain is Bifunctional protein HldE, found in Escherichia coli O9:H4 (strain HS).